The sequence spans 401 residues: Nodal homolog 3-C (401 aa).

An N-terminal signal peptide occupies residues 1–18 (MAFLSLFLCLVFSSPLMA). Positions 19 to 274 (MPPALQGRKA…KVNGFRRLRR (256 aa)) are excised as a propeptide. Residues Asn168, Asn337, and Asn344 are each glycosylated (N-linked (GlcNAc...) asparagine). Cystine bridges form between Cys299–Cys365 and Cys328–Cys396.

This sequence belongs to the TGF-beta family. Monomer. The propeptide region interacts with bmp4 in a non-covalent manner. As to expression, expressed in the dorsal marginal region of late blastula, becoming restricted to the Spemann organizer at the early gastrula stage.

Its subcellular location is the secreted. Its function is as follows. Exhibits mesoderm-dorsalizing activity and neural-inducing activity, but lacks mesoderm-inducing activity. Regulates the expression of specific mesodermal and neural genes. Induces convergent extension movements at the embryonic midline by activating the fgf signaling pathway to induce t/bra expression in the organizer region. Acts with wnt11 to induce Spemann organizer cells and induce axis formation. The unprocessed protein antagonizes bmp-signaling. This chain is Nodal homolog 3-C, found in Xenopus tropicalis (Western clawed frog).